The chain runs to 120 residues: Putative pterin-4-alpha-carbinolamine dehydratase (120 aa).

This sequence belongs to the pterin-4-alpha-carbinolamine dehydratase family.

It carries out the reaction (4aS,6R)-4a-hydroxy-L-erythro-5,6,7,8-tetrahydrobiopterin = (6R)-L-erythro-6,7-dihydrobiopterin + H2O. The chain is Putative pterin-4-alpha-carbinolamine dehydratase from Bdellovibrio bacteriovorus (strain ATCC 15356 / DSM 50701 / NCIMB 9529 / HD100).